The chain runs to 1038 residues: Ras GTPase-activating protein 1 (1038 aa).

Met1 bears the N-acetylmethionine mark. A compositionally biased stretch (low complexity) spans 1-16; that stretch reads MMAAEAGSEEGGPATA. Disordered stretches follow at residues 1–24 and 117–152; these read MMAA…AAAT and ETLG…SLDG. The segment covering 124 to 135 has biased composition (pro residues); that stretch reads GFPPLPPPPLLP. Residues 172–263 form the SH2 1 domain; that stretch reads WYHGKLDRTI…LKGEKLLYPV (92 aa). In terms of domain architecture, SH3 spans 270 to 332; sequence EDRRRVRAIL…VEDLVEEVGR (63 aa). In terms of domain architecture, SH2 2 spans 342–432; the sequence is WFHGKISKQE…VEGYYLKEPV (91 aa). The PH domain occupies 465 to 568; it reads NIVKKGYLLK…WMKGLQAFCS (104 aa). Residues 568–681 enclose the C2 domain; that stretch reads SLRKSSPGTS…QKGHATDEWF (114 aa). A Phosphotyrosine modification is found at Tyr606. The Ras-GAP domain maps to 755-965; that stretch reads KLESLLLCTL…HRMIMFLDEL (211 aa). The residue at position 822 (Ser822) is a Phosphoserine.

Interacts with SQSTM1. Interacts with SPSB1; the interaction does not promote degradation. Interacts with CAV2 (tyrosine phosphorylated form). Directly interacts with NCK1. Interacts with PDGFRB (tyrosine phosphorylated). Interacts (via SH2 domain) with the 'Tyr-9' phosphorylated form of PDPK1. Interacts with tyrosine-phosphorylated EPHB4. In terms of processing, phosphorylated by SRC and LCK. The phosphorylation SRC inhibits its ability to stimulate the Ras-GTPase activity, whereas phosphorylation by LCK does not display any effect on stimulation activity.

The protein localises to the cytoplasm. In terms of biological role, inhibitory regulator of the Ras-cyclic AMP pathway. Stimulates the GTPase of normal but not oncogenic Ras p21. The polypeptide is Ras GTPase-activating protein 1 (Rasa1) (Rattus norvegicus (Rat)).